The sequence spans 477 residues: Zinc finger C3HC-type protein 1-like (477 aa).

A C3HC-type zinc finger spans residues 95–149; the sequence is CAKYGWCNIECDMLKCSSCNAYLCASLQPILDFSKYKQRCVELQEALRKAHEKFC. A disordered region spans residues 287–392; the sequence is SLSAPGTPVS…SSSSDTSPRS (106 aa). Residues 354–363 show a composition bias toward polar residues; that stretch reads SMGQGENTGL. Positions 370-379 are enriched in basic residues; it reads SPHRRAKRPR. Over residues 382-392 the composition is skewed to low complexity; sequence SSSSSDTSPRS.

In terms of processing, phosphorylated. May also be weakly phosphorylated on Tyr residues.

It is found in the nucleus. The protein resides in the nucleus envelope. In terms of biological role, required for proper positioning of a substantial amount of TPR at the nuclear basket (NB) through interaction with TPR. This chain is Zinc finger C3HC-type protein 1-like (zc3hc1), found in Xenopus laevis (African clawed frog).